The primary structure comprises 314 residues: tRNA-cytidine(32) 2-sulfurtransferase (314 aa).

The PP-loop motif signature appears at 49-54 (SGGKDS). [4Fe-4S] cluster-binding residues include C124, C127, and C215.

Belongs to the TtcA family. Homodimer. Mg(2+) serves as cofactor. The cofactor is [4Fe-4S] cluster.

Its subcellular location is the cytoplasm. It carries out the reaction cytidine(32) in tRNA + S-sulfanyl-L-cysteinyl-[cysteine desulfurase] + AH2 + ATP = 2-thiocytidine(32) in tRNA + L-cysteinyl-[cysteine desulfurase] + A + AMP + diphosphate + H(+). The protein operates within tRNA modification. Functionally, catalyzes the ATP-dependent 2-thiolation of cytidine in position 32 of tRNA, to form 2-thiocytidine (s(2)C32). The sulfur atoms are provided by the cysteine/cysteine desulfurase (IscS) system. The chain is tRNA-cytidine(32) 2-sulfurtransferase from Histophilus somni (strain 2336) (Haemophilus somnus).